Here is a 425-residue protein sequence, read N- to C-terminus: Tyrosine--tRNA ligase (425 aa).

Residue Tyr-37 participates in L-tyrosine binding. A 'HIGH' region motif is present at residues 42 to 51; it reads PTADSLHLGH. Positions 175 and 179 each coordinate L-tyrosine. The 'KMSKS' region motif lies at 235–239; the sequence is KFGKT. Lys-238 is an ATP binding site. The region spanning 357–414 is the S4 RNA-binding domain; sequence ADLQQALVSAELVPSRGQARTMISSNAVTINGEKQADPEYTFSASDRLFDRYTLLRRG.

This sequence belongs to the class-I aminoacyl-tRNA synthetase family. TyrS type 1 subfamily. In terms of assembly, homodimer.

Its subcellular location is the cytoplasm. The catalysed reaction is tRNA(Tyr) + L-tyrosine + ATP = L-tyrosyl-tRNA(Tyr) + AMP + diphosphate + H(+). Catalyzes the attachment of tyrosine to tRNA(Tyr) in a two-step reaction: tyrosine is first activated by ATP to form Tyr-AMP and then transferred to the acceptor end of tRNA(Tyr). In Pectobacterium carotovorum subsp. carotovorum (strain PC1), this protein is Tyrosine--tRNA ligase.